A 409-amino-acid polypeptide reads, in one-letter code: Short chain dehydrogenase sirS (409 aa).

Residues V49, L68, K195, V288, T290, and A299 each contribute to the NADP(+) site. The disordered stretch occupies residues G306–S332.

The protein belongs to the short-chain dehydrogenases/reductases (SDR) family. Highly divergent.

It participates in mycotoxin biosynthesis. Short chain dehydrogenase; part of the gene cluster that mediates the biosynthesis of sirodesmin PL, an epipolythiodioxopiperazine (ETP) characterized by a disulfide bridged cyclic dipeptide and that acts as a phytotoxin which is involved in the blackleg didease of canola. SirD catalyzes the O-prenylation of L-tyrosine (L-Tyr) in the presence of dimethylallyl diphosphate (DMAPP) to yield 4-O-dimethylallyl-L-Tyr, and therefore represents probably the first pathway-specific enzyme in the biosynthesis of sirodesmin PL. 4-O-dimethylallyl-L-Tyr, then undergoes condensation with L-Ser in a reaction catalyzed by the non-ribosomal peptide synthase sirP to form the diketopiperazine (DKP) backbone. Further bishydroxylation of the DKP performed by the cytochrome P450 monooxygenase sirC leads to the production of the intermediate phomamide. This step is essential to form the reactive thiol group required for toxicity of sirodesmin PL. The next steps of sirodesmin biosynthesis are not well understood yet, but some predictions could be made from intermediate compounds identification. Phomamide is converted into phomalizarine via oxidation, probably by sirT. Further oxidation, methylation (by sirM or sirN) and reduction steps convert phomalizarine to deacetyl sirodesmin. Finally, acetyltransferase sirH probably acetylates deacetyl sirodesmin to produce sirodesmin PL. This Leptosphaeria maculans (Blackleg fungus) protein is Short chain dehydrogenase sirS.